Reading from the N-terminus, the 478-residue chain is Abscisate beta-glucosyltransferase (478 aa).

His20 serves as the catalytic Proton acceptor. His20 contributes to the an anthocyanidin binding site. Asp108 acts as the Charge relay in catalysis. Ala340, Gln342, His357, Trp360, Asn361, Ser362, and Glu365 together coordinate UDP-alpha-D-glucose. Ala380 contributes to the an anthocyanidin binding site. The UDP-alpha-D-glucose site is built by Glu381 and Gln382.

The protein belongs to the UDP-glycosyltransferase family.

It catalyses the reaction 2-cis-(+)-abscisate + UDP-alpha-D-glucose = beta-D-glucopyranosyl cis-(+)-abscisate + UDP. Glucosyltransferase involved in the catabolism of abscisic acid (ABA). Adds a glucosyl group at the C-1 position of ABA; (S)-2-trans-abscisate is a better substrate than the natural (+)-S-abscisate or its enantiomer (-)-R-abscisate. No activity with (-)-phaseic acid (PA), methylated-ABA or with other hormones such as jasmonate, zeatin, auxin (IAA) or gibberellin A3 (GA3). This is Abscisate beta-glucosyltransferase (AOG) from Phaseolus angularis (Azuki bean).